We begin with the raw amino-acid sequence, 2176 residues long: Nipped-B-like protein scc-2 (2176 aa).

Polar residues predominate over residues 1–25 (MDPNNLQNSLNGTGNPNFQPVQTNA). 7 disordered regions span residues 1 to 27 (MDPNNLQNSLNGTGNPNFQPVQTNAGG), 150 to 170 (PIPQHTIPPSTSNQFQQQIQS), 464 to 483 (SEATQSSSVTMNHHDVDEEG), 495 to 514 (MMSVGKAPKAGGGGGQNQRK), 523 to 551 (YDSLTDNFVPTDTGRRGRRRGRGSDDDED), 585 to 615 (QHFFGSQKKRRKEDRIRKDRSPTPEDVIESR), and 669 to 708 (DSLDTELKMPKNKKRRSGGDHHHKGDENSDESDEEEEMDE). A compositionally biased stretch (low complexity) spans 464 to 473 (SEATQSSSVT). Composition is skewed to basic and acidic residues over residues 597–615 (EDRIRKDRSPTPEDVIESR) and 685–695 (SGGDHHHKGDE). Residues 696-708 (NSDESDEEEEMDE) show a composition bias toward acidic residues. HEAT repeat units follow at residues 1280–1312 (DTYLKHIVFGAGSETIVALRSKALKCLSSIIEA), 1320–1351 (EDVQQAVHTRMVDSHAQVRESAVELIGRFVLY), 1353–1388 (EEYVRKYYSQIAERILDTGVAVRKRVIRIMREICEK), 1393–1426 (EMIPDMLARMIRRVTDEEGVKKLVFETFTTLWFQ), 1692–1723 (EKVFITLEFFSRYHKGGLRQKALTAMGHFCAQ), 1803–1834 (QKYWKAVLESYVDADIQLRRAAVQVVWLTLNQ), and 1840–1871 (GASIPTLIAMTTDPVDVIRNRIDILLKEIDSK). Residues 2149-2176 (ITAANDDYDEEEDGGEDSRGPIMEQMEH) form a disordered region. The span at 2154–2163 (DDYDEEEDGG) shows a compositional bias: acidic residues.

Belongs to the SCC2/Nipped-B family. In terms of assembly, may heterodimerize with mau-2/SCC4 to form the cohesin loading complex.

Its subcellular location is the nucleus. The protein localises to the chromosome. In terms of biological role, plays an important role in the loading of the cohesin complex on to meiotic chromosomes. Forms a heterodimeric complex (also known as cohesin loading complex) with mau-2/SCC4 which mediates the loading of the cohesin complex onto chromatin. Plays an essential role in cell division during embryonic development. Promotes normal chromosome organization during meiosis. Required for the assembly of the synaptonemal complex between homologous chromosomes to promote sister chromatid cohesion during meiosis. Required for chromosome segregation during mitosis and meiosis. Plays a role in DNA double-strand break (DSB) repair during meiotic recombination and promotes the assembly of the 9-1-1 cell-cycle checkpoint response complex which is required for inducing apoptosis in response to DNA damage, at DNA damage sites. The protein is Nipped-B-like protein scc-2 of Caenorhabditis elegans.